A 417-amino-acid chain; its full sequence is Serine hydroxymethyltransferase (417 aa).

Residues Leu-116 and 120 to 122 (GHL) each bind (6S)-5,6,7,8-tetrahydrofolate. Position 225 is an N6-(pyridoxal phosphate)lysine (Lys-225). 350–352 (SPF) is a (6S)-5,6,7,8-tetrahydrofolate binding site.

This sequence belongs to the SHMT family. Homodimer. Requires pyridoxal 5'-phosphate as cofactor.

It localises to the cytoplasm. It carries out the reaction (6R)-5,10-methylene-5,6,7,8-tetrahydrofolate + glycine + H2O = (6S)-5,6,7,8-tetrahydrofolate + L-serine. It participates in one-carbon metabolism; tetrahydrofolate interconversion. The protein operates within amino-acid biosynthesis; glycine biosynthesis; glycine from L-serine: step 1/1. Functionally, catalyzes the reversible interconversion of serine and glycine with tetrahydrofolate (THF) serving as the one-carbon carrier. This reaction serves as the major source of one-carbon groups required for the biosynthesis of purines, thymidylate, methionine, and other important biomolecules. Also exhibits THF-independent aldolase activity toward beta-hydroxyamino acids, producing glycine and aldehydes, via a retro-aldol mechanism. The chain is Serine hydroxymethyltransferase from Ligilactobacillus salivarius (strain UCC118) (Lactobacillus salivarius).